The following is a 319-amino-acid chain: Acetyl esterase (319 aa).

The short motif at 91–93 (HGG) is the Involved in the stabilization of the negatively charged intermediate by the formation of the oxyanion hole element. Active-site residues include Ser165, Asp262, and His292.

Belongs to the 'GDXG' lipolytic enzyme family. Homodimer. Interacts with MalT and MelA.

It localises to the cytoplasm. Its function is as follows. Displays esterase activity towards short chain fatty esters (acyl chain length of up to 8 carbons). Able to hydrolyze triacetylglycerol (triacetin) and tributyrylglycerol (tributyrin), but not trioleylglycerol (triolein) or cholesterol oleate. Negatively regulates MalT activity by antagonizing maltotriose binding. Inhibits MelA galactosidase activity. The protein is Acetyl esterase of Escherichia coli O7:K1 (strain IAI39 / ExPEC).